A 177-amino-acid polypeptide reads, in one-letter code: Large ribosomal subunit protein uL6 (177 aa).

This sequence belongs to the universal ribosomal protein uL6 family. As to quaternary structure, part of the 50S ribosomal subunit.

In terms of biological role, this protein binds to the 23S rRNA, and is important in its secondary structure. It is located near the subunit interface in the base of the L7/L12 stalk, and near the tRNA binding site of the peptidyltransferase center. This chain is Large ribosomal subunit protein uL6, found in Acinetobacter baumannii (strain AB307-0294).